The following is a 354-amino-acid chain: MGCIMSQTDDAASRSKKIDRLLKEDQENANKTVKLLLLGAGESGKSTILKQMRIIHDVGYTKDERRVFRSVVFGNIILSLNAIIAAMEQLKIEYEKEEHRADARKVLAFGATGEEDEIPDELAALMKSVWSDEGIQKAVARSREYQLNDSAEYYLSQLDRICEADYIPTQDDVLRTRIKTTGIVETQFIFKDRLFVVFDVGGQRSERKKWIHCFEDVTALIFCVAMSEYDMVLMEDRKTNRMRESLKVFDSICNSKWFVETSIILFLNKKDLFEEKIKKSPLTYCFPEYTGHDNFDDGSAFIQKQFEIVNKRQGGQKEIYTQFTCATDTNNIRFVFDAVTDIVIRDNLRTCGLY.

Gly2 carries the N-myristoyl glycine lipid modification. Cys3 is lipidated: S-palmitoyl cysteine. Residues Lys31–Tyr354 form the G-alpha domain. Positions Lys34–Thr47 are G1 motif. Residues Gly39–Ser46, Leu174–Thr180, Asp199–Gln203, Asn268–Asp271, and Ala326 each bind GTP. Mg(2+)-binding residues include Ser46 and Thr180. The segment at Asp172–Thr180 is G2 motif. The segment at Phe195–Arg204 is G3 motif. Residues Ile264–Asp271 form a G4 motif region. The interval Thr324 to Thr329 is G5 motif.

It belongs to the G-alpha family. In terms of assembly, g proteins are composed of 3 units; alpha, beta and gamma. The alpha chain contains the guanine nucleotide binding site.

Guanine nucleotide-binding proteins (G proteins) are involved as modulators or transducers in various transmembrane signaling systems. In the 1-cell embryo, probably together with goa-1, controls nuclear rotation and spindle elongation during mitosis. During the first embryonic cell divisons, plays a role in gpr-1/2 cortical localization and in the proper orientation of EMS blastomere mitotic spindle. This is Guanine nucleotide-binding protein alpha-16 subunit (gpa-16) from Caenorhabditis briggsae.